We begin with the raw amino-acid sequence, 855 residues long: Inactive rhomboid protein 1 (855 aa).

Topologically, residues Met1–Thr411 are cytoplasmic. Residues Ser76 and Ser176 each carry the phosphoserine modification. Residues Thr180 and Thr183 each carry the phosphothreonine modification. Ser390 bears the Phosphoserine mark. Residues Phe412–Phe432 form a helical membrane-spanning segment. The Lumenal segment spans residues Ser433 to Arg655. Asn583 carries an N-linked (GlcNAc...) asparagine glycan. A helical transmembrane segment spans residues Leu656 to Gln676. Residues Met677–Arg691 are Cytoplasmic-facing. Residues Ile692–Pro712 form a helical membrane-spanning segment. The Lumenal segment spans residues Tyr713 to Arg714. A helical membrane pass occupies residues Ala715–Phe735. Residues Gln736–Arg746 are Cytoplasmic-facing. A helical transmembrane segment spans residues Ala747–Ile767. Topologically, residues Asp768–His772 are lumenal. The helical transmembrane segment at Ile773–Gly793 threads the bilayer. Topologically, residues Lys794–Gln803 are cytoplasmic. A helical transmembrane segment spans residues Ile804 to Val824. Residues Tyr825–His855 are Lumenal-facing.

The protein belongs to the peptidase S54 family. In terms of assembly, homodimer, or homooligomer. Interacts with TGFA and HBEGF. Interacts with EGF; may retain EGF in the endoplasmic reticulum and regulates its degradation through the endoplasmic reticulum-associated degradation (ERAD). Interacts (via cytoplasmic N-terminus) with FRMD8/iTAP; this interaction leads to mutual protein stabilization. Interacts with ADAM17/TACE. In terms of processing, N-glycosylated. In terms of tissue distribution, highly expressed in cerebellum, cerebrum, heart, skeletal muscle, placenta, pancreatic islet and testis. Detected at lower levels in colon, kidney, small intestine and lung.

The protein localises to the endoplasmic reticulum membrane. The protein resides in the golgi apparatus membrane. Its function is as follows. Regulates ADAM17 protease, a sheddase of the epidermal growth factor (EGF) receptor ligands and TNF, thereby plays a role in sleep, cell survival, proliferation, migration and inflammation. Does not exhibit any protease activity on its own. The chain is Inactive rhomboid protein 1 (RHBDF1) from Homo sapiens (Human).